A 263-amino-acid chain; its full sequence is (2Z,6E)-farnesyl diphosphate synthase (263 aa).

Aspartate 40 is an active-site residue. Aspartate 40 contacts Mg(2+). Substrate is bound by residues 41–44 (GNRR), tryptophan 45, and 86–88 (STE). Asparagine 89 (proton acceptor) is an active-site residue. Substrate is bound by residues arginine 92, arginine 212, and 218–220 (RLS). Glutamate 231 is a binding site for Mg(2+).

This sequence belongs to the UPP synthase family. Z-FPP synthase subfamily. As to quaternary structure, homodimer. The cofactor is Mg(2+).

Its subcellular location is the cell membrane. It catalyses the reaction isopentenyl diphosphate + (2E)-geranyl diphosphate = (2Z,6E)-farnesyl diphosphate + diphosphate. Its function is as follows. Catalyzes the condensation of only one isopentenyl pyrophosphate (IPP) unit in the cis configuration to E-geranyl diphosphate (E-GPP) generating the 15 carbon product (2Z,6E)-farnesyl diphosphate (Z-FPP or EZ-FPP). Z-FPP is the precursor of decaprenyl diphosphate, which has a central role in the biosynthesis of the mycobacterial cell wall. This Mycolicibacterium smegmatis (strain ATCC 700084 / mc(2)155) (Mycobacterium smegmatis) protein is (2Z,6E)-farnesyl diphosphate synthase (uppS).